The primary structure comprises 621 residues: Chaperone protein HtpG (621 aa).

Residues 1–328 (MTQEKKKFDA…SEDLPLNISR (328 aa)) are a; substrate-binding. Residues 329-544 (ESLQHNNVLE…DTAMDIRMER (216 aa)) are b. A c region spans residues 545–621 (FLIEQKQIAN…LNDILQKAIL (77 aa)).

This sequence belongs to the heat shock protein 90 family. In terms of assembly, homodimer.

The protein resides in the cytoplasm. Its function is as follows. Molecular chaperone. Has ATPase activity. The protein is Chaperone protein HtpG of Rickettsia prowazekii (strain Madrid E).